Here is a 313-residue protein sequence, read N- to C-terminus: Protoheme IX farnesyltransferase (313 aa).

Helical transmembrane passes span 34-54 (VIELLLVTTIPAMLLADRGTV), 56-76 (PLLIINTLVGGLLAAAGANTL), 105-125 (HALIFGLTLSVASFFWLWSTT), 128-148 (LSAHLAGATIAFYVLVYTLLL), 152-172 (TSQNVVWGGAAGCMPVMIGWS), 173-193 (AVTGTIQWPALVMFLIIFFWT), 237-257 (VLATLALALTTGWLYASVAIL), and 291-311 (YLAVVFVALAVDSALALPTLL).

The protein belongs to the UbiA prenyltransferase family. Protoheme IX farnesyltransferase subfamily.

The protein resides in the cell membrane. It catalyses the reaction heme b + (2E,6E)-farnesyl diphosphate + H2O = Fe(II)-heme o + diphosphate. Its pathway is porphyrin-containing compound metabolism; heme O biosynthesis; heme O from protoheme: step 1/1. Converts heme B (protoheme IX) to heme O by substitution of the vinyl group on carbon 2 of heme B porphyrin ring with a hydroxyethyl farnesyl side group. The chain is Protoheme IX farnesyltransferase from Mycolicibacterium gilvum (strain PYR-GCK) (Mycobacterium gilvum (strain PYR-GCK)).